The primary structure comprises 458 residues: tRNA modification GTPase MnmE (458 aa).

(6S)-5-formyl-5,6,7,8-tetrahydrofolate is bound by residues arginine 26, glutamate 88, and arginine 127. Positions 224–378 (GLSTAIIGRP…IEDRINQLFF (155 aa)) constitute a TrmE-type G domain. Asparagine 234 is a binding site for K(+). GTP-binding positions include 234 to 239 (NVGKSS), 253 to 259 (TDIAGTT), and 278 to 281 (DTAG). Serine 238 is a binding site for Mg(2+). Threonine 253, isoleucine 255, and threonine 258 together coordinate K(+). Threonine 259 serves as a coordination point for Mg(2+). Residue lysine 458 coordinates (6S)-5-formyl-5,6,7,8-tetrahydrofolate.

Belongs to the TRAFAC class TrmE-Era-EngA-EngB-Septin-like GTPase superfamily. TrmE GTPase family. As to quaternary structure, homodimer. Heterotetramer of two MnmE and two MnmG subunits. K(+) is required as a cofactor.

It localises to the cytoplasm. Functionally, exhibits a very high intrinsic GTPase hydrolysis rate. Involved in the addition of a carboxymethylaminomethyl (cmnm) group at the wobble position (U34) of certain tRNAs, forming tRNA-cmnm(5)s(2)U34. This Streptococcus pyogenes serotype M1 protein is tRNA modification GTPase MnmE.